A 495-amino-acid polypeptide reads, in one-letter code: Phenylalanine--tRNA ligase alpha subunit (495 aa).

Residues threonine 338, 377–379 (QLE), and tyrosine 417 contribute to the L-phenylalanine site. Residue glutamate 419 coordinates Mg(2+). Phenylalanine 442 lines the L-phenylalanine pocket.

This sequence belongs to the class-II aminoacyl-tRNA synthetase family. Phe-tRNA synthetase alpha subunit type 2 subfamily. In terms of assembly, tetramer of two alpha and two beta subunits. Mg(2+) is required as a cofactor.

The protein localises to the cytoplasm. The enzyme catalyses tRNA(Phe) + L-phenylalanine + ATP = L-phenylalanyl-tRNA(Phe) + AMP + diphosphate + H(+). The polypeptide is Phenylalanine--tRNA ligase alpha subunit (Methanosarcina mazei (strain ATCC BAA-159 / DSM 3647 / Goe1 / Go1 / JCM 11833 / OCM 88) (Methanosarcina frisia)).